The primary structure comprises 554 residues: Serine/threonine-protein phosphatase 2B catalytic subunit (554 aa).

Fe cation contacts are provided by Asp119, His121, and Asp147. Zn(2+)-binding residues include Asp147 and Asn179. The active-site Proton donor is His180. Residues His228 and His310 each contribute to the Zn(2+) site. Positions 411-433 (LKESAPTQHKQPAPSENENKADQ) are disordered. Polar residues predominate over residues 415 to 426 (APTQHKQPAPSE).

Belongs to the PPP phosphatase family. PP-2B subfamily. In terms of assembly, composed of two components (A and B), the A component is the catalytic subunit and the B component confers calcium sensitivity. Requires Fe(3+) as cofactor. It depends on Zn(2+) as a cofactor.

It carries out the reaction O-phospho-L-seryl-[protein] + H2O = L-seryl-[protein] + phosphate. It catalyses the reaction O-phospho-L-threonyl-[protein] + H2O = L-threonyl-[protein] + phosphate. In terms of biological role, calcium-dependent, calmodulin-stimulated protein phosphatase. This subunit may have a role in the calmodulin activation of calcineurin. Appears to be involved in cytokinesis, mating, transport, nuclear and spindle pole body positioning, and cell shape. This is Serine/threonine-protein phosphatase 2B catalytic subunit (ppb1) from Schizosaccharomyces pombe (strain 972 / ATCC 24843) (Fission yeast).